The sequence spans 287 residues: MEGIIIKGIGGFYYIKTDEGIIECKARGKFRYNSLKPMVGDRVTIKVENGKGVIEDIHERSSELIRPTVANVTQAFVVFAIKNPDINLDLLNRFLTLCEYNDIHAVVCLNKEDLCTEEEKENLKELINDIGYEVLFINAKEGKGFDALKERLEHNITVLCGPSGAGKSTLLNSFIDREHMETGSVSEKIGRGKHTTRHSELIDVDNGYLVDTPGFTTLDVTFIDRDSLKYCFPEFNDYNNLCKFNGCNHYKEPKCAVKEAVEEGKINKLRYEFYIKTLEEIINRRGN.

The 158-residue stretch at 61-218 (SSELIRPTVA…LVDTPGFTTL (158 aa)) folds into the CP-type G domain. Residues 110 to 113 (NKED) and 161 to 169 (GPSGAGKST) contribute to the GTP site. Residues Cys242, Cys247, His249, and Cys255 each contribute to the Zn(2+) site.

It belongs to the TRAFAC class YlqF/YawG GTPase family. RsgA subfamily. In terms of assembly, monomer. Associates with 30S ribosomal subunit, binds 16S rRNA. Requires Zn(2+) as cofactor.

The protein localises to the cytoplasm. In terms of biological role, one of several proteins that assist in the late maturation steps of the functional core of the 30S ribosomal subunit. Helps release RbfA from mature subunits. May play a role in the assembly of ribosomal proteins into the subunit. Circularly permuted GTPase that catalyzes slow GTP hydrolysis, GTPase activity is stimulated by the 30S ribosomal subunit. This is Small ribosomal subunit biogenesis GTPase RsgA from Clostridium perfringens (strain 13 / Type A).